Consider the following 378-residue polypeptide: Ubiquitin-conjugating enzyme E2 Q2 (378 aa).

Residues 126–152 (DQPLPTGQNGTTEEVTSEEEEEEEMAE) are disordered. Over residues 140 to 152 (VTSEEEEEEEMAE) the composition is skewed to acidic residues. In terms of domain architecture, UBC core spans 207–371 (QASDRLMKEL…VQIHEKNGWY (165 aa)). The active-site Glycyl thioester intermediate is C307.

Belongs to the ubiquitin-conjugating enzyme family. Post-translationally, auto-ubiquitinated in vitro.

The protein localises to the cytoplasm. It catalyses the reaction S-ubiquitinyl-[E1 ubiquitin-activating enzyme]-L-cysteine + [E2 ubiquitin-conjugating enzyme]-L-cysteine = [E1 ubiquitin-activating enzyme]-L-cysteine + S-ubiquitinyl-[E2 ubiquitin-conjugating enzyme]-L-cysteine.. Its pathway is protein modification; protein ubiquitination. Functionally, accepts ubiquitin from the E1 complex and catalyzes its covalent attachment to other proteins. In vitro catalyzes 'Lys-48'-linked polyubiquitination. This is Ubiquitin-conjugating enzyme E2 Q2 (Ube2q2) from Mus musculus (Mouse).